An 884-amino-acid chain; its full sequence is Translation initiation factor IF-2 (884 aa).

Disordered regions lie at residues 42-62 (DVQKVTAPPTPPKGVQQQEEV) and 123-254 (EPKG…GGKK). Basic and acidic residues predominate over residues 194 to 212 (PAERREVVIPPKRKMEERA). The span at 234-248 (EPETPAGGAPGAKKG) shows a compositional bias: low complexity. The region spanning 384-553 (KRPPVVTIMG…LLQADVMDLK (170 aa)) is the tr-type G domain. Positions 393–400 (GHVDHGKT) are G1. Position 393-400 (393-400 (GHVDHGKT)) interacts with GTP. Residues 418–422 (GITQH) are G2. The G3 stretch occupies residues 439-442 (DTPG). Residues 439 to 443 (DTPGH) and 493 to 496 (NKID) each bind GTP. Residues 493-496 (NKID) are G4. The interval 529-531 (SAK) is G5.

This sequence belongs to the TRAFAC class translation factor GTPase superfamily. Classic translation factor GTPase family. IF-2 subfamily.

It is found in the cytoplasm. One of the essential components for the initiation of protein synthesis. Protects formylmethionyl-tRNA from spontaneous hydrolysis and promotes its binding to the 30S ribosomal subunits. Also involved in the hydrolysis of GTP during the formation of the 70S ribosomal complex. The protein is Translation initiation factor IF-2 of Geobacter metallireducens (strain ATCC 53774 / DSM 7210 / GS-15).